The following is a 102-amino-acid chain: N(4)-acetylcytidine amidohydrolase (102 aa).

The region spanning 6–93 (TFFSRFEQDI…IKEIYPGLDE (88 aa)) is the ASCH domain. Lys20 functions as the Proton acceptor in the catalytic mechanism. Residue Thr23 is the Nucleophile of the active site. Glu73 serves as the catalytic Proton donor.

It belongs to the N(4)-acetylcytidine amidohydrolase family.

It catalyses the reaction N(4)-acetylcytidine + H2O = cytidine + acetate + H(+). The catalysed reaction is N(4)-acetyl-2'-deoxycytidine + H2O = 2'-deoxycytidine + acetate + H(+). It carries out the reaction N(4)-acetylcytosine + H2O = cytosine + acetate + H(+). In terms of biological role, catalyzes the hydrolysis of N(4)-acetylcytidine (ac4C). The polypeptide is N(4)-acetylcytidine amidohydrolase (Serratia proteamaculans (strain 568)).